We begin with the raw amino-acid sequence, 472 residues long: 4-aminobutyrate aminotransferase (472 aa).

G135–A136 is a binding site for pyridoxal 5'-phosphate. R193 contacts substrate. K327 is subject to N6-(pyridoxal phosphate)lysine. T352 contributes to the pyridoxal 5'-phosphate binding site.

Belongs to the class-III pyridoxal-phosphate-dependent aminotransferase family. As to quaternary structure, homodimer and homotetramer. It depends on pyridoxal 5'-phosphate as a cofactor.

Its subcellular location is the cytoplasm. It carries out the reaction 4-aminobutanoate + 2-oxoglutarate = succinate semialdehyde + L-glutamate. It participates in amino-acid degradation; L-arginine degradation. Its function is as follows. Required for the degradation of gamma-aminobutyric acid (GABA), which is important for utilization of GABA as nitrogen source and for oxidative stress tolerance. Deaminates GABA to succinate semialdehyde, which in turn is converted to succinate by the succinate-semialdehyde dehydrogenase UGA2. May be involved in an alternative, arginase-independent arginine degradation pathway via GABA. The chain is 4-aminobutyrate aminotransferase from Kluyveromyces lactis (strain ATCC 8585 / CBS 2359 / DSM 70799 / NBRC 1267 / NRRL Y-1140 / WM37) (Yeast).